A 200-amino-acid chain; its full sequence is Segregation and condensation protein B (200 aa).

This sequence belongs to the ScpB family. As to quaternary structure, homodimer. Homodimerization may be required to stabilize the binding of ScpA to the Smc head domains. Component of a cohesin-like complex composed of ScpA, ScpB and the Smc homodimer, in which ScpA and ScpB bind to the head domain of Smc. The presence of the three proteins is required for the association of the complex with DNA.

Its subcellular location is the cytoplasm. In terms of biological role, participates in chromosomal partition during cell division. May act via the formation of a condensin-like complex containing Smc and ScpA that pull DNA away from mid-cell into both cell halves. The sequence is that of Segregation and condensation protein B from Lactobacillus delbrueckii subsp. bulgaricus (strain ATCC 11842 / DSM 20081 / BCRC 10696 / JCM 1002 / NBRC 13953 / NCIMB 11778 / NCTC 12712 / WDCM 00102 / Lb 14).